Here is a 141-residue protein sequence, read N- to C-terminus: Hemoglobin subunit alpha (141 aa).

In terms of domain architecture, Globin spans V1–R141. S3 is subject to Phosphoserine. Residues K7 and K11 each carry the N6-succinyllysine modification. At K16 the chain carries N6-acetyllysine; alternate. The residue at position 16 (K16) is an N6-succinyllysine; alternate. Y24 bears the Phosphotyrosine mark. The residue at position 40 (K40) is an N6-succinyllysine. Position 49 is a phosphoserine (S49). H58 contacts O2. Residue H87 participates in heme b binding. S102 carries the phosphoserine modification. Position 108 is a phosphothreonine (T108). S124 and S131 each carry phosphoserine. Phosphothreonine occurs at positions 134 and 137. Residue S138 is modified to Phosphoserine.

The protein belongs to the globin family. Heterotetramer of two alpha chains and two beta chains. In terms of tissue distribution, red blood cells.

Functionally, involved in oxygen transport from the lung to the various peripheral tissues. This is Hemoglobin subunit alpha from Microtus pennsylvanicus (Meadow vole).